A 378-amino-acid chain; its full sequence is Erythronate-4-phosphate dehydrogenase (378 aa).

Residues S45 and T66 each coordinate substrate. Residues D146 and T175 each contribute to the NAD(+) site. The active site involves R208. An NAD(+)-binding site is contributed by D232. The active site involves E237. H254 functions as the Proton donor in the catalytic mechanism. G257 serves as a coordination point for NAD(+). Y258 lines the substrate pocket.

The protein belongs to the D-isomer specific 2-hydroxyacid dehydrogenase family. PdxB subfamily. In terms of assembly, homodimer.

It localises to the cytoplasm. It carries out the reaction 4-phospho-D-erythronate + NAD(+) = (R)-3-hydroxy-2-oxo-4-phosphooxybutanoate + NADH + H(+). It functions in the pathway cofactor biosynthesis; pyridoxine 5'-phosphate biosynthesis; pyridoxine 5'-phosphate from D-erythrose 4-phosphate: step 2/5. Catalyzes the oxidation of erythronate-4-phosphate to 3-hydroxy-2-oxo-4-phosphonooxybutanoate. The sequence is that of Erythronate-4-phosphate dehydrogenase from Escherichia coli (strain ATCC 8739 / DSM 1576 / NBRC 3972 / NCIMB 8545 / WDCM 00012 / Crooks).